Consider the following 199-residue polypeptide: Glycerol-3-phosphate acyltransferase (199 aa).

5 consecutive transmembrane segments (helical) span residues 3–23 (YILI…YLLP), 50–70 (VIGF…VLVF), 77–97 (IHYT…PVFL), 110–130 (GVFF…WISI), and 136–156 (YVSL…FFFN).

The protein belongs to the PlsY family. Probably interacts with PlsX.

It is found in the cell inner membrane. The enzyme catalyses an acyl phosphate + sn-glycerol 3-phosphate = a 1-acyl-sn-glycero-3-phosphate + phosphate. The protein operates within lipid metabolism; phospholipid metabolism. Its function is as follows. Catalyzes the transfer of an acyl group from acyl-phosphate (acyl-PO(4)) to glycerol-3-phosphate (G3P) to form lysophosphatidic acid (LPA). This enzyme utilizes acyl-phosphate as fatty acyl donor, but not acyl-CoA or acyl-ACP. The chain is Glycerol-3-phosphate acyltransferase from Pseudothermotoga lettingae (strain ATCC BAA-301 / DSM 14385 / NBRC 107922 / TMO) (Thermotoga lettingae).